Here is a 513-residue protein sequence, read N- to C-terminus: Interferon-induced, double-stranded RNA-activated protein kinase (513 aa).

An N-acetylalanine modification is found at Ala-2. The DRBM 1 domain maps to 8 to 76 (FYVDKLNKYS…AKLAVEILDN (69 aa)). A Glycyl lysine isopeptide (Lys-Gly) (interchain with G-Cter in ISG15) cross-link involves residue Lys-68. Ser-82 carries the post-translational modification Phosphoserine. Thr-84 carries the post-translational modification Phosphothreonine. The 68-residue stretch at 95–162 (NYIGLVNSFA…AKNAYQKLSE (68 aa)) folds into the DRBM 2 domain. Position 96 is a phosphotyrosine; by autocatalysis (Tyr-96). Residue Lys-154 forms a Glycyl lysine isopeptide (Lys-Gly) (interchain with G-Cter in ISG15) linkage. Tyr-157 bears the Phosphotyrosine; by autocatalysis mark. Phosphothreonine is present on Thr-227. The interaction with TRAF5 stretch occupies residues 235–513 (DFEDIEEIGS…ISEKKKRNTC (279 aa)). The region spanning 236–502 (FEDIEEIGSG…EILKTLAEWK (267 aa)) is the Protein kinase domain. Residue 242–250 (IGSGGFGQV) participates in ATP binding. Tyr-262 carries the post-translational modification Phosphotyrosine; by autocatalysis. Residue Lys-265 coordinates ATP. Asp-373 serves as the catalytic Proton acceptor. Thr-406 and Thr-411 each carry phosphothreonine; by autocatalysis. Position 416 is a phosphoserine (Ser-416).

Belongs to the protein kinase superfamily. Ser/Thr protein kinase family. GCN2 subfamily. Homodimer. Interacts with DNAJC3. Interacts with STRBP. Forms a complex with FANCA, FANCC, FANCG and HSP70. Interacts with ADAR/ADAR1. The inactive form interacts with NCK1 and GSN. Interacts (via the kinase catalytic domain) with STAT3 (via SH2 domain), TRAF2 (C-terminus), TRAF5 (C-terminus) and TRAF6 (C-terminus). Interacts with MAP2K6, IKBKB/IKKB, IRS1, NPM1, TARBP2, NLRP1, NLRP3, NLRC4 and AIM2. Interacts (via DRBM 1 domain) with DUS2L (via DRBM domain). Interacts with DHX9 (via N-terminus) and this interaction is dependent upon activation of the kinase. In terms of processing, autophosphorylated on several Ser, Thr and Tyr residues. Autophosphorylation of Thr-411 is dependent on Thr-406 and is stimulated by dsRNA binding and dimerization. Autophosphorylation apparently leads to the activation of the kinase. Tyrosine autophosphorylation is essential for efficient dsRNA-binding, dimerization, and kinase activation.

Its subcellular location is the cytoplasm. It localises to the nucleus. The protein resides in the perinuclear region. It carries out the reaction L-seryl-[protein] + ATP = O-phospho-L-seryl-[protein] + ADP + H(+). The enzyme catalyses L-threonyl-[protein] + ATP = O-phospho-L-threonyl-[protein] + ADP + H(+). The catalysed reaction is L-tyrosyl-[protein] + ATP = O-phospho-L-tyrosyl-[protein] + ADP + H(+). Its activity is regulated as follows. Initially produced in an inactive form and is activated by binding to viral dsRNA, which causes dimerization and autophosphorylation in the activation loop and stimulation of function. ISGylation can activate it in the absence of viral infection. Can also be activated by heparin, pro-inflammatory stimuli, growth factors, cytokines, oxidative stress and the cellular protein PRKRA. Activity is markedly stimulated by manganese ions. Activation is blocked by the cellular proteins TARBP2, DUS2L, NPM1, NCK1 and ADAR. Functionally, IFN-induced dsRNA-dependent serine/threonine-protein kinase that phosphorylates the alpha subunit of eukaryotic translation initiation factor 2 (EIF2S1/eIF-2-alpha) and plays a key role in the innate immune response to viral infection. Inhibits viral replication via the integrated stress response (ISR): EIF2S1/eIF-2-alpha phosphorylation in response to viral infection converts EIF2S1/eIF-2-alpha in a global protein synthesis inhibitor, resulting to a shutdown of cellular and viral protein synthesis, while concomitantly initiating the preferential translation of ISR-specific mRNAs, such as the transcriptional activator ATF4. Exerts its antiviral activity on a wide range of DNA and RNA viruses. Also involved in the regulation of signal transduction, apoptosis, cell proliferation and differentiation: phosphorylates other substrates including p53/TP53, PPP2R5A, DHX9, ILF3 and IRS1. In addition to serine/threonine-protein kinase activity, also has tyrosine-protein kinase activity and phosphorylates CDK1 at 'Tyr-4' upon DNA damage, facilitating its ubiquitination and proteasomal degradation. Either as an adapter protein and/or via its kinase activity, can regulate various signaling pathways (p38 MAP kinase, NF-kappa-B and insulin signaling pathways) and transcription factors (JUN, STAT1, STAT3, IRF1, ATF3) involved in the expression of genes encoding pro-inflammatory cytokines and IFNs. Activates the NF-kappa-B pathway via interaction with IKBKB and TRAF family of proteins and activates the p38 MAP kinase pathway via interaction with MAP2K6. Can act as both a positive and negative regulator of the insulin signaling pathway (ISP). Negatively regulates ISP by inducing the inhibitory phosphorylation of insulin receptor substrate 1 (IRS1) at 'Ser-312' and positively regulates ISP via phosphorylation of PPP2R5A which activates FOXO1, which in turn up-regulates the expression of insulin receptor substrate 2 (IRS2). Can regulate NLRP3 inflammasome assembly and the activation of NLRP3, NLRP1, AIM2 and NLRC4 inflammasomes. Plays a role in the regulation of the cytoskeleton by binding to gelsolin (GSN), sequestering the protein in an inactive conformation away from actin. In Rattus norvegicus (Rat), this protein is Interferon-induced, double-stranded RNA-activated protein kinase (Eif2ak2).